Consider the following 509-residue polypeptide: Steroid 17-alpha-hydroxylase/17,20 lyase (509 aa).

N202 is a binding site for substrate. Residue C442 coordinates heme.

It belongs to the cytochrome P450 family. The cofactor is heme.

It is found in the endoplasmic reticulum membrane. Its subcellular location is the microsome membrane. The catalysed reaction is a C21-steroid + reduced [NADPH--hemoprotein reductase] + O2 = a 17alpha-hydroxy-C21-steroid + oxidized [NADPH--hemoprotein reductase] + H2O + H(+). It carries out the reaction progesterone + reduced [NADPH--hemoprotein reductase] + O2 = 17alpha-hydroxyprogesterone + oxidized [NADPH--hemoprotein reductase] + H2O + H(+). The enzyme catalyses pregnenolone + reduced [NADPH--hemoprotein reductase] + O2 = 17alpha-hydroxypregnenolone + oxidized [NADPH--hemoprotein reductase] + H2O + H(+). It catalyses the reaction 17alpha-hydroxyprogesterone + reduced [NADPH--hemoprotein reductase] + O2 = androst-4-ene-3,17-dione + acetate + oxidized [NADPH--hemoprotein reductase] + H2O + 2 H(+). The catalysed reaction is 17alpha-hydroxyprogesterone + reduced [NADPH--hemoprotein reductase] + O2 = 16alpha,17alpha-dihydroxyprogesterone + oxidized [NADPH--hemoprotein reductase] + H2O + H(+). It carries out the reaction 16alpha,17alpha-dihydroxyprogesterone + reduced [NADPH--hemoprotein reductase] + O2 = 6beta,16alpha,17alpha-trihydroxyprogesterone + oxidized [NADPH--hemoprotein reductase] + H2O + H(+). The enzyme catalyses 17alpha-hydroxypregnenolone + reduced [NADPH--hemoprotein reductase] + O2 = 3beta-hydroxyandrost-5-en-17-one + acetate + oxidized [NADPH--hemoprotein reductase] + H2O + 2 H(+). It catalyses the reaction 16alpha,17alpha-dihydroxypregnenolone + reduced [NADPH--hemoprotein reductase] + O2 = 3beta,16alpha-dihydroxy-androst-5-en-17-one + acetate + oxidized [NADPH--hemoprotein reductase] + H2O + 2 H(+). The catalysed reaction is 3beta-hydroxyandrost-5-en-17-one + reduced [NADPH--hemoprotein reductase] + O2 = 3beta,16alpha-dihydroxy-androst-5-en-17-one + oxidized [NADPH--hemoprotein reductase] + H2O + H(+). It carries out the reaction androst-4-ene-3,17-dione + reduced [NADPH--hemoprotein reductase] + O2 = 16alpha-hydroxyandrost-4-ene-3,17-dione + oxidized [NADPH--hemoprotein reductase] + H2O + H(+). It participates in steroid hormone biosynthesis. It functions in the pathway steroid biosynthesis; glucocorticoid biosynthesis. With respect to regulation, regulated predominantly by intracellular cAMP levels. The 17,20-lyase activity is stimulated by cytochrome b5, which acts as an allosteric effector increasing the Vmax of the lyase activity. Its function is as follows. A cytochrome P450 monooxygenase involved in corticoid and androgen biosynthesis. Catalyzes 17-alpha hydroxylation of C21 steroids, which is common for both pathways. A second oxidative step, required only for androgen synthesis, involves an acyl-carbon cleavage. The 17-alpha hydroxy intermediates, as part of adrenal glucocorticoids biosynthesis pathway, are precursors of cortisol. Hydroxylates steroid hormones, pregnenolone and progesterone to form 17-alpha hydroxy metabolites, followed by the cleavage of the C17-C20 bond to form C19 steroids, dehydroepiandrosterone (DHEA) and androstenedione. Has 16-alpha hydroxylase activity. Catalyzes 16-alpha hydroxylation of 17-alpha hydroxy pregnenolone, followed by the cleavage of the C17-C20 bond to form 16-alpha-hydroxy DHEA. Also 16-alpha hydroxylates androgens, relevant for estriol synthesis. Mechanistically, uses molecular oxygen inserting one oxygen atom into a substrate, and reducing the second into a water molecule, with two electrons provided by NADPH via cytochrome P450 reductase (CPR; NADPH-ferrihemoprotein reductase). The chain is Steroid 17-alpha-hydroxylase/17,20 lyase (CYP17A1) from Ovis aries (Sheep).